Here is a 256-residue protein sequence, read N- to C-terminus: Pimeloyl-[acyl-carrier protein] methyl ester esterase (256 aa).

Positions H15–P242 constitute an AB hydrolase-1 domain. Substrate-binding positions include W22, S82 to L83, and F143 to Q147. S82 serves as the catalytic Nucleophile. Catalysis depends on residues D207 and H235. Residue H235 participates in substrate binding.

Belongs to the AB hydrolase superfamily. Carboxylesterase BioH family. Monomer.

Its subcellular location is the cytoplasm. The catalysed reaction is 6-carboxyhexanoyl-[ACP] methyl ester + H2O = 6-carboxyhexanoyl-[ACP] + methanol + H(+). The protein operates within cofactor biosynthesis; biotin biosynthesis. Functionally, the physiological role of BioH is to remove the methyl group introduced by BioC when the pimeloyl moiety is complete. It allows to synthesize pimeloyl-ACP via the fatty acid synthetic pathway through the hydrolysis of the ester bonds of pimeloyl-ACP esters. The chain is Pimeloyl-[acyl-carrier protein] methyl ester esterase from Escherichia fergusonii (strain ATCC 35469 / DSM 13698 / CCUG 18766 / IAM 14443 / JCM 21226 / LMG 7866 / NBRC 102419 / NCTC 12128 / CDC 0568-73).